The chain runs to 130 residues: Small ribosomal subunit protein uS8 (130 aa).

Belongs to the universal ribosomal protein uS8 family. As to quaternary structure, part of the 30S ribosomal subunit. Contacts proteins S5 and S12.

Functionally, one of the primary rRNA binding proteins, it binds directly to 16S rRNA central domain where it helps coordinate assembly of the platform of the 30S subunit. This is Small ribosomal subunit protein uS8 from Aeromonas salmonicida (strain A449).